Reading from the N-terminus, the 722-residue chain is Inactive serine protease PAMR1 (722 aa).

An N-terminal signal peptide occupies residues 1 to 21 (MALLVWSSLVVASLHLLGTAA). Asn98 carries N-linked (GlcNAc...) asparagine glycosylation. Cystine bridges form between Cys130–Cys152, Cys179–Cys201, Cys241–Cys252, Cys246–Cys262, Cys264–Cys273, Cys282–Cys331, Cys317–Cys344, and Cys416–Cys444. Residues 130–238 (CGEVIQAARG…DGFYVTFEEV (109 aa)) enclose the CUB domain. An EGF-like domain is found at 237–274 (EVTGCSSTPCFHDGTCIADKTGSYRCACLAGYTGRHCE). Sushi domains are found at residues 280–346 (KSCK…VCIK) and 393–446 (KPAL…SCIP). Asn318 is a glycosylation site (N-linked (GlcNAc...) asparagine). One can recognise a Peptidase S1 domain in the interval 447–722 (ICGKLENFNI…FKEWLEKNMK (276 aa)). A glycan (N-linked (GlcNAc...) asparagine) is linked at Asn455. An intrachain disulfide couples Cys491 to Cys507. The N-linked (GlcNAc...) asparagine glycan is linked to Asn616. 2 disulfides stabilise this stretch: Cys632–Cys651 and Cys663–Cys699.

It belongs to the peptidase S1 family.

Its subcellular location is the secreted. Functionally, may play a role in regeneration of skeletal muscle. This is Inactive serine protease PAMR1 (pamr1) from Xenopus tropicalis (Western clawed frog).